Consider the following 255-residue polypeptide: MSQPLLSVNGLMMRFGGLLAVNNVNLELYPQEIVSLIGPNGAGKTTVFNCLTGFYKPTGGTILLRDQHLEGLPGQQIARMGVVRTFQHVRLFREMTVIENLLVAQHQQLKTGLFSGLLKTPSFRRAQSEALDRAATWLERIGLLEHANRQASNLAYGDQRRLEIARCMVTQPEILMLDEPAAGLNPKETKELDELIAELRNHHNTTILLIEHDMKLVMGISDRIYVVNQGTPLANGTPEQIRNNPDVIRAYLGEA.

Residues L6–E254 form the ABC transporter domain. Residue G38–T45 participates in ATP binding.

The protein belongs to the ABC transporter superfamily.

Component of the leucine-specific transport system. The sequence is that of High-affinity branched-chain amino acid transport ATP-binding protein LivG (livG) from Escherichia coli O157:H7.